The chain runs to 396 residues: 1-deoxy-D-xylulose 5-phosphate reductoisomerase (396 aa).

Positions 10, 11, 12, 13, 38, and 123 each coordinate NADPH. Lysine 124 contributes to the 1-deoxy-D-xylulose 5-phosphate binding site. Glutamate 125 provides a ligand contact to NADPH. Aspartate 149 contributes to the Mn(2+) binding site. 4 residues coordinate 1-deoxy-D-xylulose 5-phosphate: serine 150, glutamate 151, serine 185, and histidine 208. Glutamate 151 provides a ligand contact to Mn(2+). Position 214 (glycine 214) interacts with NADPH. The 1-deoxy-D-xylulose 5-phosphate site is built by serine 221, asparagine 226, lysine 227, and glutamate 230. A Mn(2+)-binding site is contributed by glutamate 230.

Belongs to the DXR family. The cofactor is Mg(2+). Mn(2+) serves as cofactor.

It catalyses the reaction 2-C-methyl-D-erythritol 4-phosphate + NADP(+) = 1-deoxy-D-xylulose 5-phosphate + NADPH + H(+). It functions in the pathway isoprenoid biosynthesis; isopentenyl diphosphate biosynthesis via DXP pathway; isopentenyl diphosphate from 1-deoxy-D-xylulose 5-phosphate: step 1/6. Catalyzes the NADPH-dependent rearrangement and reduction of 1-deoxy-D-xylulose-5-phosphate (DXP) to 2-C-methyl-D-erythritol 4-phosphate (MEP). In Shewanella pealeana (strain ATCC 700345 / ANG-SQ1), this protein is 1-deoxy-D-xylulose 5-phosphate reductoisomerase.